The primary structure comprises 77 residues: Vacuolar ATPase assembly integral membrane protein VMA21 (77 aa).

Residues 1–8 (MAVDVPTS) lie on the Cytoplasmic side of the membrane. Residues 9 to 29 (VIVKLMFFTLAMVSFPVLTFF) traverse the membrane as a helical segment. At 30–41 (VSQQYTSNTLVN) the chain is on the lumenal side. A helical membrane pass occupies residues 42–62 (GGLAALAANVVLFAYVIMAFS). Residues 63–77 (EDVPQSDGKESKKQQ) lie on the Cytoplasmic side of the membrane. The Prevents secretion from ER signature appears at 74-77 (KKQQ).

This sequence belongs to the VMA21 family.

It localises to the endoplasmic reticulum membrane. Its subcellular location is the endoplasmic reticulum-Golgi intermediate compartment membrane. It is found in the cytoplasmic vesicle. The protein resides in the COPII-coated vesicle membrane. In terms of biological role, required for the assembly of the V0 complex of the vacuolar ATPase (V-ATPase) in the endoplasmic reticulum. This chain is Vacuolar ATPase assembly integral membrane protein VMA21, found in Eremothecium gossypii (strain ATCC 10895 / CBS 109.51 / FGSC 9923 / NRRL Y-1056) (Yeast).